The following is a 347-amino-acid chain: NADH-ubiquinone oxidoreductase chain 2 (347 aa).

The next 10 membrane-spanning stretches (helical) occupy residues 1 to 21, 25 to 45, 59 to 79, 111 to 131, 149 to 169, 178 to 198, 201 to 221, 237 to 257, 274 to 294, and 326 to 346; these read MNPL…AIVA, HWLM…PILM, YFLT…MNLV, FHFW…LILL, INLD…GWGG, IMAY…TYNP, TLLN…MFML, MPLL…LPPL, NSVI…YFYM, and LSPL…LALL.

The protein belongs to the complex I subunit 2 family. In terms of assembly, core subunit of respiratory chain NADH dehydrogenase (Complex I) which is composed of 45 different subunits. Interacts with TMEM242.

The protein resides in the mitochondrion inner membrane. It catalyses the reaction a ubiquinone + NADH + 5 H(+)(in) = a ubiquinol + NAD(+) + 4 H(+)(out). Core subunit of the mitochondrial membrane respiratory chain NADH dehydrogenase (Complex I) which catalyzes electron transfer from NADH through the respiratory chain, using ubiquinone as an electron acceptor. Essential for the catalytic activity and assembly of complex I. This chain is NADH-ubiquinone oxidoreductase chain 2, found in Pteropus rodricensis (Rodriguez flying fox).